The sequence spans 626 residues: Probable metalloendopeptidase G1-type (626 aa).

Position 42 (His-42) interacts with Zn(2+). The active site involves Glu-45. Zn(2+) is bound at residue His-46.

This sequence belongs to the peptidase M44 family. Zn(2+) is required as a cofactor.

Seems to be involved in viral proteins maturation by cleavage at Ala-Gly-|-Xaa motifs. The sequence is that of Probable metalloendopeptidase G1-type from Fowlpox virus (strain NVSL) (FPV).